A 169-amino-acid chain; its full sequence is Cyclic pyranopterin monophosphate synthase (169 aa).

Residues 83–85 (LCH) and 121–122 (ME) contribute to the substrate site. D136 is an active-site residue.

Belongs to the MoaC family. In terms of assembly, homohexamer; trimer of dimers.

It catalyses the reaction (8S)-3',8-cyclo-7,8-dihydroguanosine 5'-triphosphate = cyclic pyranopterin phosphate + diphosphate. It functions in the pathway cofactor biosynthesis; molybdopterin biosynthesis. Catalyzes the conversion of (8S)-3',8-cyclo-7,8-dihydroguanosine 5'-triphosphate to cyclic pyranopterin monophosphate (cPMP). The polypeptide is Cyclic pyranopterin monophosphate synthase (Rhodospirillum centenum (strain ATCC 51521 / SW)).